The primary structure comprises 301 residues: tRNA pseudouridine synthase B (301 aa).

Aspartate 38 acts as the Nucleophile in catalysis.

Belongs to the pseudouridine synthase TruB family. Type 1 subfamily.

The enzyme catalyses uridine(55) in tRNA = pseudouridine(55) in tRNA. Responsible for synthesis of pseudouridine from uracil-55 in the psi GC loop of transfer RNAs. In Limosilactobacillus reuteri (strain DSM 20016) (Lactobacillus reuteri), this protein is tRNA pseudouridine synthase B.